The primary structure comprises 81 residues: Exodeoxyribonuclease 7 small subunit (81 aa).

It belongs to the XseB family. Heterooligomer composed of large and small subunits.

It is found in the cytoplasm. The catalysed reaction is Exonucleolytic cleavage in either 5'- to 3'- or 3'- to 5'-direction to yield nucleoside 5'-phosphates.. Bidirectionally degrades single-stranded DNA into large acid-insoluble oligonucleotides, which are then degraded further into small acid-soluble oligonucleotides. This chain is Exodeoxyribonuclease 7 small subunit, found in Pasteurella multocida (strain Pm70).